Here is a 122-residue protein sequence, read N- to C-terminus: Large ribosomal subunit protein uL14 (122 aa).

This sequence belongs to the universal ribosomal protein uL14 family. Part of the 50S ribosomal subunit. Forms a cluster with proteins L3 and L19. In the 70S ribosome, L14 and L19 interact and together make contacts with the 16S rRNA in bridges B5 and B8.

In terms of biological role, binds to 23S rRNA. Forms part of two intersubunit bridges in the 70S ribosome. The polypeptide is Large ribosomal subunit protein uL14 (Mycoplasma pneumoniae (strain ATCC 29342 / M129 / Subtype 1) (Mycoplasmoides pneumoniae)).